A 968-amino-acid polypeptide reads, in one-letter code: Alanine--tRNA ligase, cytoplasmic (968 aa).

Residues Arg77, His95, Trp176, and 214-216 (IWN) each bind ATP. Asn216 and Asp239 together coordinate L-alanine. Gly243 is a binding site for ATP. Zn(2+) contacts are provided by His606, His610, Cys724, and His728.

The protein belongs to the class-II aminoacyl-tRNA synthetase family. Monomer. Zn(2+) serves as cofactor.

The protein localises to the cytoplasm. It carries out the reaction tRNA(Ala) + L-alanine + ATP = L-alanyl-tRNA(Ala) + AMP + diphosphate. Catalyzes the attachment of alanine to tRNA(Ala) in a two-step reaction: alanine is first activated by ATP to form Ala-AMP and then transferred to the acceptor end of tRNA(Ala). Also edits incorrectly charged tRNA(Ala) via its editing domain. The protein is Alanine--tRNA ligase, cytoplasmic of Caenorhabditis elegans.